An 85-amino-acid polypeptide reads, in one-letter code: Follicular dendritic cell secreted peptide (85 aa).

Positions 1–17 (MKKVLLLITAILAVAVG) are cleaved as a signal peptide. The O-glycosylated at one site stretch occupies residues 75–83 (SAPTTPLPS).

Post-translationally, O-glycosylated with core 1 or possibly core 8 glycans. In terms of tissue distribution, abundantly expressed in tonsil, lymph node, and trachea; strong expression in prostate; lower expression in thyroid, stomach, and colon.

Its subcellular location is the secreted. Its function is as follows. Can bind to the surface of B-lymphoma cells, but not T-lymphoma cells, consistent with a function as a secreted mediator acting upon B-cells. This chain is Follicular dendritic cell secreted peptide (FDCSP), found in Homo sapiens (Human).